The following is a 315-amino-acid chain: Putative methyltransferase SPBC8D2.16c (315 aa).

Belongs to the class IV-like SAM-binding methyltransferase superfamily.

The protein resides in the cytoplasm. It localises to the nucleus. The polypeptide is Putative methyltransferase SPBC8D2.16c (Schizosaccharomyces pombe (strain 972 / ATCC 24843) (Fission yeast)).